The primary structure comprises 329 residues: Intradiol ring-cleavage dioxygenase hqdA (329 aa).

Fe cation is bound by residues Tyr-167, Tyr-201, His-225, and His-227.

It belongs to the intradiol ring-cleavage dioxygenase family. Homodimer. Fe(3+) is required as a cofactor.

The enzyme catalyses catechol + O2 = cis,cis-muconate + 2 H(+). It catalyses the reaction benzene-1,2,4-triol + O2 = maleylacetate + 2 H(+). Functionally, intradiol ring-cleavage dioxygenase involved in an alternative pathway to the protocatechuic acid pathway since it is active on hydroxyquinol and catechol but not on protocatechuic acid. The protein is Intradiol ring-cleavage dioxygenase hqdA of Aspergillus niger (strain ATCC MYA-4892 / CBS 513.88 / FGSC A1513).